An 89-amino-acid chain; its full sequence is Small ribosomal subunit protein uS15 (89 aa).

It belongs to the universal ribosomal protein uS15 family. As to quaternary structure, part of the 30S ribosomal subunit. Forms a bridge to the 50S subunit in the 70S ribosome, contacting the 23S rRNA.

One of the primary rRNA binding proteins, it binds directly to 16S rRNA where it helps nucleate assembly of the platform of the 30S subunit by binding and bridging several RNA helices of the 16S rRNA. In terms of biological role, forms an intersubunit bridge (bridge B4) with the 23S rRNA of the 50S subunit in the ribosome. The chain is Small ribosomal subunit protein uS15 from Pseudomonas entomophila (strain L48).